A 150-amino-acid chain; its full sequence is MKVIFTQDVRGRGQRGQIKEVPDGYAQNYLIKRGLAKQATKAAMSQLKGQQRAEEKHAAEELADAKRMKKILEDDNTVVELSGKAGTDGRMFGSISTKQIATALQKQFDLKIDKRKIELAAPIKALGYVNVPIKLHPEVEAQIRVHIAEK.

Belongs to the bacterial ribosomal protein bL9 family.

Binds to the 23S rRNA. The polypeptide is Large ribosomal subunit protein bL9 (Limosilactobacillus reuteri (strain DSM 20016) (Lactobacillus reuteri)).